A 275-amino-acid chain; its full sequence is Phosphonoacetaldehyde hydrolase (275 aa).

Asp15 serves as the catalytic Nucleophile. Positions 15 and 17 each coordinate Mg(2+). The active-site Schiff-base intermediate with substrate is the Lys56. Asp189 is a Mg(2+) binding site.

Belongs to the HAD-like hydrolase superfamily. PhnX family. In terms of assembly, homodimer. Mg(2+) is required as a cofactor.

The enzyme catalyses phosphonoacetaldehyde + H2O = acetaldehyde + phosphate + H(+). Involved in phosphonate degradation. This is Phosphonoacetaldehyde hydrolase from Pseudomonas fluorescens (strain SBW25).